The following is a 362-amino-acid chain: Neisseria adhesin A (362 aa).

The N-terminal stretch at 1–23 (MKHFPSKVLTTAILATFCSGALA) is a signal peptide. The segment at 24-169 (ATSDDDVKKA…NIVKIDEKLE (146 aa)) is head domain. Coiled coils occupy residues 90-146 (VTNL…LNKL) and 183-288 (NDIA…KETR). The coiled stalk domain stretch occupies residues 170 to 307 (AVADTVDKHA…SGLFQPYNVG (138 aa)). The next 4 beta stranded transmembrane spans lie at 307-317 (GRFNVTAAVGG), 321-332 (ESAVAIGTGFRF), 339-345 (KAGVAVG), and 351-362 (SAAYHVGVNYEW). The segment at 308–362 (RFNVTAAVGGYKSESAVAIGTGFRFTENFAAKAGVAVGTSSGSSAAYHVGVNYEW) is translocator domain.

This sequence belongs to the autotransporter-2 (AT-2) (TC 1.B.40) family. In terms of assembly, forms high molecular weight oligomers in whole cell extracts that are not disrupted by boiling in SDS buffer. Homotrimer. A fragment containing the N-terminal half of the mature protein (residues 24-210, head domain plus part of the stalk) binds human integrin beta-1 (ITGB1). It was not seen to bind immobilized purified CEACAMs 1, 3, 5, 6 or 8 nor commercially prepared type I collagen, fibronectin or matrigel.

It is found in the cell surface. The protein localises to the cell outer membrane. Adheres to and induces bacterial uptake by human epithelial cells. Upon expression in engineered Y.enterocolitica confers an 11- to 15-fold increase in bacterial adherence and uptake by human epithelial cell lines; part of the uptake is mediated by integrin beta-1 (ITGB1) suggesting it may be a human receptor for NadA. A bacterial cell surface protein; antisera against this protein induce complement-mediated killing of this and other strains. The sequence is that of Neisseria adhesin A from Neisseria meningitidis serogroup B (strain ATCC BAA-335 / MC58).